A 279-amino-acid chain; its full sequence is MTELTRIPLAGVIGSPIAHSRSPALHGYWLKRYGLKGHYIPMDVAQADLRDVLAAMPRMGFVGCNVTIPHKESVIGLADIVTDRAALIGAANTLIFGKDGKIHADNTDGTGFTANLRQNAPAWQPQSGPAVVWGAGGAARAVIAALIEVGVPEIRLANRSRARADALRSDFGAKVHVHDWVQAGNILEDAMTVVNTTSLGMVGKPEFRVPLDALNPKAVVTDLVYAPLRTRLLVEAEAAGCRTVDGLGMLLHQAAPGFERWFGVRPEVDEETRAAVLAT.

Shikimate is bound by residues 20 to 22 (SRS) and Thr-67. Lys-71 (proton acceptor) is an active-site residue. Residue Asp-83 participates in NADP(+) binding. Shikimate contacts are provided by Asn-92 and Asp-108. NADP(+) contacts are provided by residues 134–138 (GAGGA) and Leu-223. Tyr-225 contributes to the shikimate binding site. Gly-246 serves as a coordination point for NADP(+).

Belongs to the shikimate dehydrogenase family. Homodimer.

The enzyme catalyses shikimate + NADP(+) = 3-dehydroshikimate + NADPH + H(+). It participates in metabolic intermediate biosynthesis; chorismate biosynthesis; chorismate from D-erythrose 4-phosphate and phosphoenolpyruvate: step 4/7. Functionally, involved in the biosynthesis of the chorismate, which leads to the biosynthesis of aromatic amino acids. Catalyzes the reversible NADPH linked reduction of 3-dehydroshikimate (DHSA) to yield shikimate (SA). This Cereibacter sphaeroides (strain ATCC 17023 / DSM 158 / JCM 6121 / CCUG 31486 / LMG 2827 / NBRC 12203 / NCIMB 8253 / ATH 2.4.1.) (Rhodobacter sphaeroides) protein is Shikimate dehydrogenase (NADP(+)).